The following is a 486-amino-acid chain: Iron-sulfur cluster assembly SufBD family protein ycf24 (486 aa).

Belongs to the iron-sulfur cluster assembly SufBD family.

Its subcellular location is the plastid. It is found in the chloroplast. This chain is Iron-sulfur cluster assembly SufBD family protein ycf24 (ycf24), found in Trieres chinensis (Marine centric diatom).